The following is a 445-amino-acid chain: Tubulin beta-2 chain (445 aa).

The MREI motif signature appears at 1–4 (MREI). Residues Gln-11, Glu-69, Ser-138, Gly-142, Thr-143, Gly-144, Asn-204, and Asn-226 each coordinate GTP. Glu-69 lines the Mg(2+) pocket. Positions 424–445 (QYQDATADEQGEFEEEGEEDEA) are disordered. The span at 429–445 (TADEQGEFEEEGEEDEA) shows a compositional bias: acidic residues. Glu-438 is modified (5-glutamyl polyglutamate).

It belongs to the tubulin family. Dimer of alpha and beta chains. A typical microtubule is a hollow water-filled tube with an outer diameter of 25 nm and an inner diameter of 15 nM. Alpha-beta heterodimers associate head-to-tail to form protofilaments running lengthwise along the microtubule wall with the beta-tubulin subunit facing the microtubule plus end conferring a structural polarity. Microtubules usually have 13 protofilaments but different protofilament numbers can be found in some organisms and specialized cells. Mg(2+) serves as cofactor. In terms of processing, some glutamate residues at the C-terminus are polyglycylated, resulting in polyglycine chains on the gamma-carboxyl group. Glycylation is mainly limited to tubulin incorporated into axonemes (cilia and flagella) whereas glutamylation is prevalent in neuronal cells, centrioles, axonemes, and the mitotic spindle. Both modifications can coexist on the same protein on adjacent residues, and lowering polyglycylation levels increases polyglutamylation, and reciprocally. The precise function of polyglycylation is still unclear. Post-translationally, some glutamate residues at the C-terminus are polyglutamylated, resulting in polyglutamate chains on the gamma-carboxyl group. Polyglutamylation plays a key role in microtubule severing by spastin (SPAST). SPAST preferentially recognizes and acts on microtubules decorated with short polyglutamate tails: severing activity by SPAST increases as the number of glutamates per tubulin rises from one to eight, but decreases beyond this glutamylation threshold. Highly expressed in neuronal cells.

The protein resides in the cytoplasm. It is found in the cytoskeleton. Tubulin is the major constituent of microtubules, a cylinder consisting of laterally associated linear protofilaments composed of alpha- and beta-tubulin heterodimers. Microtubules grow by the addition of GTP-tubulin dimers to the microtubule end, where a stabilizing cap forms. Below the cap, tubulin dimers are in GDP-bound state, owing to GTPase activity of alpha-tubulin. The chain is Tubulin beta-2 chain from Gallus gallus (Chicken).